Reading from the N-terminus, the 274-residue chain is 2,3,4,5-tetrahydropyridine-2,6-dicarboxylate N-succinyltransferase (274 aa).

The protein belongs to the transferase hexapeptide repeat family.

The protein localises to the cytoplasm. It carries out the reaction (S)-2,3,4,5-tetrahydrodipicolinate + succinyl-CoA + H2O = (S)-2-succinylamino-6-oxoheptanedioate + CoA. It functions in the pathway amino-acid biosynthesis; L-lysine biosynthesis via DAP pathway; LL-2,6-diaminopimelate from (S)-tetrahydrodipicolinate (succinylase route): step 1/3. This chain is 2,3,4,5-tetrahydropyridine-2,6-dicarboxylate N-succinyltransferase, found in Erwinia tasmaniensis (strain DSM 17950 / CFBP 7177 / CIP 109463 / NCPPB 4357 / Et1/99).